Consider the following 577-residue polypeptide: Arginine--tRNA ligase (577 aa).

A 'HIGH' region motif is present at residues 122 to 132 (PNVAKEMHVGH).

It belongs to the class-I aminoacyl-tRNA synthetase family. As to quaternary structure, monomer.

It localises to the cytoplasm. The catalysed reaction is tRNA(Arg) + L-arginine + ATP = L-arginyl-tRNA(Arg) + AMP + diphosphate. The protein is Arginine--tRNA ligase of Vibrio vulnificus (strain CMCP6).